The sequence spans 135 residues: MAQTENQKSKRIPLGKDVSTQRRLSKARRHFRLRKKIAGTTERPRLVVHRSSRHLHAQLVDDTVGKTIAAASSIEPDVRAVEGDKTAKGKKVGELIAARAKAAGVEAVVFDRGGHDYHGRIAALADAAREGGLKF.

Residues methionine 1–serine 25 are disordered.

The protein belongs to the universal ribosomal protein uL18 family. As to quaternary structure, part of the 50S ribosomal subunit; part of the 5S rRNA/L5/L18/L25 subcomplex. Contacts the 5S and 23S rRNAs.

In terms of biological role, this is one of the proteins that bind and probably mediate the attachment of the 5S RNA into the large ribosomal subunit, where it forms part of the central protuberance. This Nocardia farcinica (strain IFM 10152) protein is Large ribosomal subunit protein uL18.